Reading from the N-terminus, the 580-residue chain is MRASLPVHLVVCTQLSAVWFGVAKAHGGHRLEPHVPGFLQGFTDITPAGDDVSANVTSSEPAKLDLSCVHSDNKGSRAPTIGEPVPDVSLEQCAAQCKAVDGCTHFTYNDDSKMCHVKEGKPDLYDLTGGKTASRSCDRSCFEQHVSYEGAPDVMTAMVTSQSADCQAACAADPSCEIFTYNEHDQKCTFKGRGFSAFKERGVLGVTSGPKQFCDEGGKLTQEEMEDQISGCIQLSDVGSMTADLEEPMEADSVGACMERCRCDGRCTHFTFNDNTRMCYLKGDKMQLYSSPGDRTGPKSCDSSCFSNGVSYVDDPATDVETVFEISHPIYCQVICAANPLCTVFQWYASEAKCVVKRKGFYKHRKTGVTGVTVGPREFCDFGGSIRDREEADAVGSDDGLNAEATMANSPDFHDEVECVHTGNIGSKAQTIGEVKRASSLSECRARCQAEKECSHYTYNVKSGLCYPKRGKPQFYKYLGDMTGSRTCDTSCLRRGVDYSQGPEVGKPWYSTLPTDCQVACDAEDACLVFTWDSATSRCYLIGSGFSAHRRNDVDGVVSGPYTFCDNGENLQVLEAKDTE.

Residues methionine 1 to alanine 25 form the signal peptide. Apple domains are found at residues cysteine 68–cysteine 137, cysteine 141–cysteine 214, cysteine 232–cysteine 301, cysteine 305–glycine 375, cysteine 419–cysteine 488, and cysteine 492–cysteine 565. Cystine bridges form between cysteine 68-cysteine 137, cysteine 93-cysteine 115, cysteine 97-cysteine 103, cysteine 141-cysteine 214, cysteine 166-cysteine 188, cysteine 170-cysteine 176, cysteine 232-cysteine 301, cysteine 257-cysteine 279, cysteine 261-cysteine 267, cysteine 305-cysteine 380, cysteine 332-cysteine 354, cysteine 336-cysteine 342, cysteine 419-cysteine 488, cysteine 444-cysteine 466, and cysteine 448-cysteine 454.

In terms of assembly, monomer. Part of the MIC6-MIC1-MIC4 complex. Interacts (via the second apple domain) directly with MIC1 (via the beta-finger region). Interacts with murine TLR2; the interaction promotes activation of bone marrow-derived dendritic cells and macrophages in the host. Interacts with murine TLR4; the interaction promotes activation of bone marrow-derived dendritic cells and macrophages in the host. Proteolytically cleaved at the N- and C-terminus after release from the microneme.

It is found in the cytoplasmic vesicle. Its subcellular location is the secretory vesicle. The protein localises to the microneme. The protein resides in the host early endosome. With respect to regulation, lacto-N-biose inhibits binding to asialofetuin, a host glycoprotein. Functionally, soluble adhesin with carbohydrate-binding activity. Binds to galactose-terminating oligosaccharides. Required for attachment of the parasite to the host cell prior to invasion. Triggers the activation of murine bone marrow-derived dendritic cells and macrophages and production of pro-inflammatory cytokines, such as IL12 (IL12B/IL12A), in host TLR2/TLR4-dependent manner. Triggers the production of anti-inflammatory cytokine IL10 in murine bone marrow-derived macrophages in host TLR4-dependent manner. Induces transient endotoxin tolerance in murine bone marrow-derived macrophages, manifested by reduced TNF-alpha (TNF) production in response to challenge with lipopolysaccharides (LPS). This Toxoplasma gondii protein is Micronemal protein 4.